Reading from the N-terminus, the 269-residue chain is Interleukin-1 beta (269 aa).

Positions M1–D116 are excised as a propeptide.

It belongs to the IL-1 family. As to quaternary structure, monomer. In its precursor form, weakly interacts with full-length MEFV; the mature cytokine does not interact at all. Interacts with integrins ITGAV:ITGBV and ITGA5:ITGB1; integrin-binding is required for IL1B signaling. Interacts with cargo receptor TMED10; the interaction is direct and is required for the secretion of IL1B mature form. Interacts with HSP90AB1; the interaction facilitates cargo translocation into the ERGIC. Interacts with HSP90B1; the interaction facilitates cargo translocation into the ERGIC.

The protein resides in the cytoplasm. The protein localises to the cytosol. It is found in the secreted. It localises to the lysosome. Its subcellular location is the extracellular exosome. Its function is as follows. Potent pro-inflammatory cytokine. Initially discovered as the major endogenous pyrogen, induces prostaglandin synthesis, neutrophil influx and activation, T-cell activation and cytokine production, B-cell activation and antibody production, and fibroblast proliferation and collagen production. Promotes Th17 differentiation of T-cells. Synergizes with IL12/interleukin-12 to induce IFNG synthesis from T-helper 1 (Th1) cells. Plays a role in angiogenesis by inducing VEGF production synergistically with TNF and IL6. Involved in transduction of inflammation downstream of pyroptosis: its mature form is specifically released in the extracellular milieu by passing through the gasdermin-D (GSDMD) pore. In Macaca mulatta (Rhesus macaque), this protein is Interleukin-1 beta (IL1B).